We begin with the raw amino-acid sequence, 124 residues long: Large ribosomal subunit protein uL22 (124 aa).

The protein belongs to the universal ribosomal protein uL22 family. As to quaternary structure, part of the 50S ribosomal subunit.

This protein binds specifically to 23S rRNA; its binding is stimulated by other ribosomal proteins, e.g. L4, L17, and L20. It is important during the early stages of 50S assembly. It makes multiple contacts with different domains of the 23S rRNA in the assembled 50S subunit and ribosome. Its function is as follows. The globular domain of the protein is located near the polypeptide exit tunnel on the outside of the subunit, while an extended beta-hairpin is found that lines the wall of the exit tunnel in the center of the 70S ribosome. The protein is Large ribosomal subunit protein uL22 of Treponema pallidum (strain Nichols).